Here is a 426-residue protein sequence, read N- to C-terminus: Melibiose/raffinose/stachyose-binding protein MelE (426 aa).

Positions 1–18 (MKHTFVLFLSLILLVLPG) are cleaved as a signal peptide. C19 is lipidated: N-palmitoyl cysteine. The S-diacylglycerol cysteine moiety is linked to residue C19.

It belongs to the bacterial solute-binding protein 1 family. As to quaternary structure, the complex is composed of two ATP-binding proteins (MsmX), two transmembrane proteins (MelC and MelD) and a solute-binding protein (MelE).

It is found in the cell membrane. Part of the ABC transporter complex MelEDC-MsmX involved in melibiose, raffinose and stachyose import. Binds melibiose, raffinose and stachyose. This chain is Melibiose/raffinose/stachyose-binding protein MelE, found in Bacillus subtilis (strain 168).